A 470-amino-acid chain; its full sequence is Nuclear receptor subfamily 0 group B member 1 (470 aa).

3 consecutive repeat copies span residues 1–67 (MAGE…YRCC), 68–133 (FCGK…YRCC), and 134–200 (FCGE…YRCC). A 4 X 67 AA tandem repeats region spans residues 1-253 (MAGENHQWQG…RPVALKSPQV (253 aa)). 3 consecutive short sequence motifs (LXXLL motif) follow at residues 13–17 (LYNML), 80–84 (LYSML), and 146–150 (LYSLL). The 4; truncated repeat unit spans residues 201 to 253 (FCGEDHPQQGSTLYCMPTSTNQAQAAPEERPRAPWWDTSSGALRPVALKSPQV). Residues 205-469 (DHPQQGSTLY…DMMLEMLCTK (265 aa)) form the NR LBD domain. The AF-2 motif motif lies at 461-466 (MMLEML).

It belongs to the nuclear hormone receptor family. NR0 subfamily. Homodimer. Interacts with NR5A1, NR5A2, NR0B2 and with COPS2. Interacts with ESRRB; represses ESRRB activity at the GATA6 promoter.

It localises to the nucleus. It is found in the cytoplasm. Its function is as follows. Nuclear receptor that lacks a DNA-binding domain and acts as a corepressor that inhibits the transcriptional activity of other nuclear receptors through heterodimeric interactions. Component of a cascade required for the development of the hypothalamic-pituitary-adrenal-gonadal axis. May also have a role in the development of the embryo and in the maintenance of embryonic stem cell pluripotency. This chain is Nuclear receptor subfamily 0 group B member 1 (NR0B1), found in Pan troglodytes (Chimpanzee).